We begin with the raw amino-acid sequence, 234 residues long: DNA repair and recombination protein RadB (234 aa).

Belongs to the eukaryotic RecA-like protein family. RadB subfamily.

Its function is as follows. Involved in DNA repair and in homologous recombination. May regulate the cleavage reactions of the branch-structured DNA. Has a very weak ATPase activity that is not stimulated by DNA. Binds DNA but does not promote DNA strands exchange. The protein is DNA repair and recombination protein RadB of Methanobrevibacter smithii (strain ATCC 35061 / DSM 861 / OCM 144 / PS).